A 653-amino-acid chain; its full sequence is DNA mismatch repair protein MutL (653 aa).

A disordered region spans residues 368–413 (EVSQVAEPEGKTDITNKKETETKEKAEKKENKQEEKEEKTSAPEYV). The segment covering 375–408 (PEGKTDITNKKETETKEKAEKKENKQEEKEEKTS) has biased composition (basic and acidic residues).

Belongs to the DNA mismatch repair MutL/HexB family.

Functionally, this protein is involved in the repair of mismatches in DNA. It is required for dam-dependent methyl-directed DNA mismatch repair. May act as a 'molecular matchmaker', a protein that promotes the formation of a stable complex between two or more DNA-binding proteins in an ATP-dependent manner without itself being part of a final effector complex. The sequence is that of DNA mismatch repair protein MutL from Lactobacillus delbrueckii subsp. bulgaricus (strain ATCC 11842 / DSM 20081 / BCRC 10696 / JCM 1002 / NBRC 13953 / NCIMB 11778 / NCTC 12712 / WDCM 00102 / Lb 14).